The chain runs to 56 residues: Large ribosomal subunit protein bL32 (56 aa).

Residues 1 to 26 (MAVQKSKVTRSRRGQRRSHDALTAAA) form a disordered region. Over residues 7 to 16 (KVTRSRRGQR) the composition is skewed to basic residues.

Belongs to the bacterial ribosomal protein bL32 family.

The protein is Large ribosomal subunit protein bL32 (rpmF) of Moritella marina (Vibrio marinus).